The sequence spans 94 residues: Large ribosomal subunit protein uL23 (94 aa).

It belongs to the universal ribosomal protein uL23 family. As to quaternary structure, part of the 50S ribosomal subunit. Contacts protein L29, and trigger factor when it is bound to the ribosome.

One of the early assembly proteins it binds 23S rRNA. One of the proteins that surrounds the polypeptide exit tunnel on the outside of the ribosome. Forms the main docking site for trigger factor binding to the ribosome. The sequence is that of Large ribosomal subunit protein uL23 from Lysinibacillus sphaericus (strain C3-41).